Reading from the N-terminus, the 121-residue chain is Large ribosomal subunit protein bL12 (121 aa).

Belongs to the bacterial ribosomal protein bL12 family. In terms of assembly, homodimer. Part of the ribosomal stalk of the 50S ribosomal subunit. Forms a multimeric L10(L12)X complex, where L10 forms an elongated spine to which 2 to 4 L12 dimers bind in a sequential fashion. Binds GTP-bound translation factors.

Forms part of the ribosomal stalk which helps the ribosome interact with GTP-bound translation factors. Is thus essential for accurate translation. The protein is Large ribosomal subunit protein bL12 of Shewanella baltica (strain OS185).